The primary structure comprises 318 residues: Malate dehydrogenase (318 aa).

NAD(+) contacts are provided by residues 10–15 (GGGQIG) and Asp-34. The substrate site is built by Arg-83 and Arg-89. Residues Asn-96 and 119–121 (ISN) each bind NAD(+). The substrate site is built by Asn-121 and Arg-152. His-176 functions as the Proton acceptor in the catalytic mechanism.

It belongs to the LDH/MDH superfamily. MDH type 3 family.

It carries out the reaction (S)-malate + NAD(+) = oxaloacetate + NADH + H(+). Catalyzes the reversible oxidation of malate to oxaloacetate. This chain is Malate dehydrogenase, found in Geotalea uraniireducens (strain Rf4) (Geobacter uraniireducens).